The sequence spans 160 residues: Putative UPF0479 protein YBL113W-A (160 aa).

The next 2 helical transmembrane spans lie at Ile39 to Gln59 and Val136 to His156.

The protein belongs to the UPF0479 family.

The protein resides in the membrane. The chain is Putative UPF0479 protein YBL113W-A from Saccharomyces cerevisiae (strain ATCC 204508 / S288c) (Baker's yeast).